We begin with the raw amino-acid sequence, 330 residues long: MSKLGDYAAVKKDILAVLKQPEYDDGSAGPVLVRLAWHASGTYCARTDTGGSNGAGMRYEAEGGDPANAGLQHARVFLEPIKEKHSWITYADLWTLAGVVAIEAMGGPSIQWKPGRTDFADDSRLPPRGRLPDGAQGADHLRFIFNRMGFNDQEIVALSGAHNLGRCHSDRSGFEGPWVNSPTRFSNQYYKLLLKLKWQPKKWDGPFQYVAKAPGADDDDEQLMMLPTDYALIQDEKMRPWVEKYAEDRDAFFNDFAKVFAKLIELGVYRDESGIARADKMKQFKGEYKSAPQKSPVPGAPGAGKDGEANPLARQNERAHGQAQHALAKL.

Histidine 38 acts as the Proton acceptor in catalysis. Position 162 (histidine 162) interacts with heme b. Tryptophan 178 serves as the catalytic Tryptophan radical intermediate. The segment at 286–330 (GEYKSAPQKSPVPGAPGAGKDGEANPLARQNERAHGQAQHALAKL) is disordered.

It belongs to the peroxidase family. Cytochrome c peroxidase subfamily. The cofactor is heme b.

Its function is as follows. Destroys radicals which are normally produced within the cells and which are toxic to biological systems. The polypeptide is Putative heme-binding peroxidase (CCP2) (Mycosarcoma maydis (Corn smut fungus)).